The chain runs to 253 residues: Triosephosphate isomerase (253 aa).

9–11 (NWK) lines the substrate pocket. His96 (electrophile) is an active-site residue. Glu169 functions as the Proton acceptor in the catalytic mechanism. Residues Gly175, Ser215, and 236-237 (GG) each bind substrate.

This sequence belongs to the triosephosphate isomerase family. Homodimer.

It localises to the cytoplasm. The enzyme catalyses D-glyceraldehyde 3-phosphate = dihydroxyacetone phosphate. The protein operates within carbohydrate biosynthesis; gluconeogenesis. It participates in carbohydrate degradation; glycolysis; D-glyceraldehyde 3-phosphate from glycerone phosphate: step 1/1. Involved in the gluconeogenesis. Catalyzes stereospecifically the conversion of dihydroxyacetone phosphate (DHAP) to D-glyceraldehyde-3-phosphate (G3P). This chain is Triosephosphate isomerase, found in Borreliella burgdorferi (strain ZS7) (Borrelia burgdorferi).